Consider the following 455-residue polypeptide: Kynurenine 3-monooxygenase (455 aa).

This sequence belongs to the aromatic-ring hydroxylase family. KMO subfamily. The cofactor is FAD.

It carries out the reaction L-kynurenine + NADPH + O2 + H(+) = 3-hydroxy-L-kynurenine + NADP(+) + H2O. It participates in cofactor biosynthesis; NAD(+) biosynthesis; quinolinate from L-kynurenine: step 1/3. Its function is as follows. Catalyzes the hydroxylation of L-kynurenine (L-Kyn) to form 3-hydroxy-L-kynurenine (L-3OHKyn). Required for synthesis of quinolinic acid. The sequence is that of Kynurenine 3-monooxygenase from Xanthomonas oryzae pv. oryzae (strain PXO99A).